We begin with the raw amino-acid sequence, 350 residues long: Quinolinate phosphoribosyltransferase [decarboxylating] 1 (350 aa).

Substrate is bound by residues Arg-141, 172 to 174 (TRK), Arg-196, Lys-206, Glu-239, Asp-266, 298 to 300 (SGN), and 319 to 321 (SGA).

Belongs to the NadC/ModD family.

The catalysed reaction is nicotinate beta-D-ribonucleotide + CO2 + diphosphate = quinolinate + 5-phospho-alpha-D-ribose 1-diphosphate + 2 H(+). The protein operates within alkaloid biosynthesis; nicotine biosynthesis. It functions in the pathway cofactor biosynthesis; NAD(+) biosynthesis; nicotinate D-ribonucleotide from quinolinate: step 1/1. In terms of biological role, involved in the biosynthesis of pyridine alkaloid natural products, leading mainly to the production of anabasine, anatabine, nicotine and nornicotine, effective deterrents against herbivores with antiparasitic and pesticide properties (neurotoxins); nornicotine serves as the precursor in the synthesis of the carcinogen compound N'-nitrosonornicotine (NNN). Involved in the catabolism of quinolinic acid (QA). The chain is Quinolinate phosphoribosyltransferase [decarboxylating] 1 from Nicotiana glauca (Glaucous tobacco).